The primary structure comprises 507 residues: Lysine--tRNA ligase (507 aa).

Mg(2+) contacts are provided by Glu406 and Glu413.

This sequence belongs to the class-II aminoacyl-tRNA synthetase family. In terms of assembly, homodimer. Requires Mg(2+) as cofactor.

Its subcellular location is the cytoplasm. The enzyme catalyses tRNA(Lys) + L-lysine + ATP = L-lysyl-tRNA(Lys) + AMP + diphosphate. In Wolinella succinogenes (strain ATCC 29543 / DSM 1740 / CCUG 13145 / JCM 31913 / LMG 7466 / NCTC 11488 / FDC 602W) (Vibrio succinogenes), this protein is Lysine--tRNA ligase.